Here is a 62-residue protein sequence, read N- to C-terminus: DNA gyrase inhibitor YacG (62 aa).

Cys8, Cys11, Cys27, and Cys31 together coordinate Zn(2+).

Belongs to the DNA gyrase inhibitor YacG family. As to quaternary structure, interacts with GyrB. Requires Zn(2+) as cofactor.

In terms of biological role, inhibits all the catalytic activities of DNA gyrase by preventing its interaction with DNA. Acts by binding directly to the C-terminal domain of GyrB, which probably disrupts DNA binding by the gyrase. In Actinobacillus pleuropneumoniae serotype 5b (strain L20), this protein is DNA gyrase inhibitor YacG.